Consider the following 129-residue polypeptide: Protein UL131A (129 aa).

An N-terminal signal peptide occupies residues 1–18; that stretch reads MRLCRVWLSVCLCAVVLG.

Forms the envelope pentamer complex (PC) composed of gH, gL, UL128, UL130, and UL131A. The pentamer interacts with host NRP2. The interaction with gH is important for the formation of UL128, UL130, gH-gL complex.

The protein resides in the virion membrane. Plays a role in viral entry into host cells. Forms a pentameric complex at the surface of the viral envelope together with gH, gL, UL130 and UL131. This complex is required for entry in epithelial, endothelial and myeloid host cells. Mechanistically, engages host receptor(s) including neurophilin 2/NRP2 to mediate infection. Contributes to the formation of the complex between UL128, UL130 and gH-gL. This chain is Protein UL131A (UL131A), found in Human cytomegalovirus (strain Merlin) (HHV-5).